A 442-amino-acid chain; its full sequence is Exodeoxyribonuclease 7 large subunit (442 aa).

This sequence belongs to the XseA family. Heterooligomer composed of large and small subunits.

It localises to the cytoplasm. It carries out the reaction Exonucleolytic cleavage in either 5'- to 3'- or 3'- to 5'-direction to yield nucleoside 5'-phosphates.. In terms of biological role, bidirectionally degrades single-stranded DNA into large acid-insoluble oligonucleotides, which are then degraded further into small acid-soluble oligonucleotides. The polypeptide is Exodeoxyribonuclease 7 large subunit (Shewanella loihica (strain ATCC BAA-1088 / PV-4)).